The following is a 591-amino-acid chain: Ferric-chelate reductase 1 (591 aa).

Residues 6–26 (FTVSAFILLLHVSFVANYPSG) form a helical membrane-spanning segment. The 167-residue stretch at 13–179 (LLLHVSFVAN…FTTPEATIAP (167 aa)) folds into the Reelin domain. N-linked (GlcNAc...) asparagine glycans are attached at residues Asn-50, Asn-85, Asn-308, Asn-321, and Asn-353. One can recognise a DOMON domain in the interval 216 to 331 (ERACVLLSFT…ASYYIFVADG (116 aa)). The Cytochrome b561 domain occupies 335–533 (DGRIHKHSQQ…VGTEIILEIH (199 aa)). A helical transmembrane segment spans residues 372–392 (VHGALMFVAWMTTVSVGVLIA). The heme b site is built by His-373 and His-413. Transmembrane regions (helical) follow at residues 416 to 436 (LMLT…IYRG) and 445 to 465 (HPYL…LAAF). Positions 445 and 481 each coordinate heme b. The next 3 membrane-spanning stretches (helical) occupy residues 490–510 (IIAV…LPGP), 514–534 (YAMI…EIHA), and 568–588 (VVLA…LSAI).

The protein belongs to the FRRS1 family. Requires heme b as cofactor.

Its subcellular location is the membrane. In terms of biological role, ferric-chelate reductases reduce Fe(3+) to Fe(2+) before its transport from the endosome to the cytoplasm. The sequence is that of Ferric-chelate reductase 1 (FRRS1) from Bos taurus (Bovine).